We begin with the raw amino-acid sequence, 165 residues long: Keratin-associated protein 5-7 (165 aa).

Repeat copies occupy residues 35 to 38, 41 to 44, 47 to 50, 116 to 119, 126 to 129, 145 to 148, and 155 to 158. Positions 35–158 are 7 X 4 AA repeats of C-C-X-P; that stretch reads CCVPVCCCKP…CCSQSSCCVP (124 aa).

It belongs to the KRTAP type 5 family. In terms of assembly, interacts with hair keratins. As to expression, expressed in hair root but not in skin.

In the hair cortex, hair keratin intermediate filaments are embedded in an interfilamentous matrix, consisting of hair keratin-associated protein (KRTAP), which are essential for the formation of a rigid and resistant hair shaft through their extensive disulfide bond cross-linking with abundant cysteine residues of hair keratins. The matrix proteins include the high-sulfur and high-glycine-tyrosine keratins. The sequence is that of Keratin-associated protein 5-7 (KRTAP5-7) from Homo sapiens (Human).